A 508-amino-acid polypeptide reads, in one-letter code: Photosystem II CP47 reaction center protein (508 aa).

A run of 6 helical transmembrane segments spans residues 21–36 (SVHIMHTALVSGWAGS), 101–115 (IVFSGLCFLAAIWHW), 140–156 (GIHLFLSGVACFGSGAF), 203–218 (IAAGILGILAGLFHLS), 237–252 (VLSSSIAAVFFAAFIV), and 457–472 (TFALLFFFGHIWHGAR).

The protein belongs to the PsbB/PsbC family. PsbB subfamily. As to quaternary structure, PSII is composed of 1 copy each of membrane proteins PsbA, PsbB, PsbC, PsbD, PsbE, PsbF, PsbH, PsbI, PsbJ, PsbK, PsbL, PsbM, PsbT, PsbX, PsbY, PsbZ, Psb30/Ycf12, at least 3 peripheral proteins of the oxygen-evolving complex and a large number of cofactors. It forms dimeric complexes. Binds multiple chlorophylls. PSII binds additional chlorophylls, carotenoids and specific lipids. is required as a cofactor.

The protein resides in the plastid. It is found in the chloroplast thylakoid membrane. In terms of biological role, one of the components of the core complex of photosystem II (PSII). It binds chlorophyll and helps catalyze the primary light-induced photochemical processes of PSII. PSII is a light-driven water:plastoquinone oxidoreductase, using light energy to abstract electrons from H(2)O, generating O(2) and a proton gradient subsequently used for ATP formation. The polypeptide is Photosystem II CP47 reaction center protein (Cycas taitungensis (Prince sago)).